The primary structure comprises 370 residues: Queuine tRNA-ribosyltransferase (370 aa).

The active-site Proton acceptor is the aspartate 93. Substrate is bound by residues aspartate 93–phenylalanine 97, aspartate 147, glutamine 190, and glycine 217. The segment at glycine 248 to tyrosine 254 is RNA binding. Aspartate 267 serves as the catalytic Nucleophile. Positions threonine 272–arginine 276 are RNA binding; important for wobble base 34 recognition. Zn(2+) is bound by residues cysteine 305, cysteine 307, cysteine 310, and histidine 336.

This sequence belongs to the queuine tRNA-ribosyltransferase family. As to quaternary structure, homodimer. Within each dimer, one monomer is responsible for RNA recognition and catalysis, while the other monomer binds to the replacement base PreQ1. It depends on Zn(2+) as a cofactor.

The enzyme catalyses 7-aminomethyl-7-carbaguanine + guanosine(34) in tRNA = 7-aminomethyl-7-carbaguanosine(34) in tRNA + guanine. Its pathway is tRNA modification; tRNA-queuosine biosynthesis. Catalyzes the base-exchange of a guanine (G) residue with the queuine precursor 7-aminomethyl-7-deazaguanine (PreQ1) at position 34 (anticodon wobble position) in tRNAs with GU(N) anticodons (tRNA-Asp, -Asn, -His and -Tyr). Catalysis occurs through a double-displacement mechanism. The nucleophile active site attacks the C1' of nucleotide 34 to detach the guanine base from the RNA, forming a covalent enzyme-RNA intermediate. The proton acceptor active site deprotonates the incoming PreQ1, allowing a nucleophilic attack on the C1' of the ribose to form the product. After dissociation, two additional enzymatic reactions on the tRNA convert PreQ1 to queuine (Q), resulting in the hypermodified nucleoside queuosine (7-(((4,5-cis-dihydroxy-2-cyclopenten-1-yl)amino)methyl)-7-deazaguanosine). The protein is Queuine tRNA-ribosyltransferase of Natranaerobius thermophilus (strain ATCC BAA-1301 / DSM 18059 / JW/NM-WN-LF).